Here is a 384-residue protein sequence, read N- to C-terminus: MNSTLFSQVENHSVHSNFSEKNAQLLAFENDDCHLPLAMIFTLALAYGAVIILGVSGNLALIIIILKQKEMRNVTNILIVNLSFSDLLVAIMCLPFTFVYTLMDHWVFGEAMCKLNPFVQCVSITVSIFSLVLIAVERHQLIINPRGWRPNNRHAYVGIAVIWVLAVASSLPFLIYQVMTDEPFQNVTLDAYKDKYVCFDQFPSDSHRLSYTTLLLVLQYFGPLCFIFICYFKIYIRLKRRNNMMDKMRDNKYRSSETKRINIMLLSIVVAFAVCWLPLTIFNTVFDWNHQIIATCNHNLLFLLCHLTAMISTCVNPIFYGFLNKNFQRDLQFFFNFCDFRSRDDDYETIAMSTMHTDVSKTSLKQASPVAFKKINNNDDNEKI.

Topologically, residues 1–44 (MNSTLFSQVENHSVHSNFSEKNAQLLAFENDDCHLPLAMIFTLA) are extracellular. N-linked (GlcNAc...) asparagine glycosylation is found at Asn-2, Asn-11, and Asn-17. A helical transmembrane segment spans residues 45–65 (LAYGAVIILGVSGNLALIIII). Residues 66-76 (LKQKEMRNVTN) lie on the Cytoplasmic side of the membrane. A helical membrane pass occupies residues 77-97 (ILIVNLSFSDLLVAIMCLPFT). Over 98-116 (FVYTLMDHWVFGEAMCKLN) the chain is Extracellular. A disulfide bond links Cys-113 and Cys-198. Residues 117-137 (PFVQCVSITVSIFSLVLIAVE) form a helical membrane-spanning segment. The Cytoplasmic portion of the chain corresponds to 138–154 (RHQLIINPRGWRPNNRH). A helical transmembrane segment spans residues 155–175 (AYVGIAVIWVLAVASSLPFLI). Over 176–211 (YQVMTDEPFQNVTLDAYKDKYVCFDQFPSDSHRLSY) the chain is Extracellular. A helical transmembrane segment spans residues 212 to 232 (TTLLLVLQYFGPLCFIFICYF). The Cytoplasmic segment spans residues 233-260 (KIYIRLKRRNNMMDKMRDNKYRSSETKR). The chain crosses the membrane as a helical span at residues 261–281 (INIMLLSIVVAFAVCWLPLTI). The Extracellular portion of the chain corresponds to 282–299 (FNTVFDWNHQIIATCNHN). Residues 300–320 (LLFLLCHLTAMISTCVNPIFY) form a helical membrane-spanning segment. At 321-384 (GFLNKNFQRD…INNNDDNEKI (64 aa)) the chain is on the cytoplasmic side. Cys-338 carries the S-palmitoyl cysteine lipid modification. Ser-368 is modified (phosphoserine).

Belongs to the G-protein coupled receptor 1 family.

The protein resides in the cell membrane. Receptor for neuropeptide Y and peptide YY. The rank order of affinity of this receptor for pancreatic polypeptides is NPY &gt; [Pro-34] PYY, PYY and [Leu-31, Pro-34] NPY &gt; NPY (2-36) &gt; [Ile-31, Gln-34] PP and PYY (3-36) &gt; PP &gt; NPY free acid. In Homo sapiens (Human), this protein is Neuropeptide Y receptor type 1 (NPY1R).